A 257-amino-acid polypeptide reads, in one-letter code: 7-carboxy-7-deazaguanine synthase (257 aa).

Residues 29–31 (LQG) and Arg-44 each bind substrate. One can recognise a Radical SAM core domain in the interval 35-253 (LAGTPSVFVR…PRLHVALWND (219 aa)). The [4Fe-4S] cluster site is built by Cys-48, Cys-52, and Cys-55. Ser-57 contributes to the Mg(2+) binding site. Substrate is bound at residue Thr-90. Position 92 (Gly-92) interacts with S-adenosyl-L-methionine. The disordered stretch occupies residues 133–153 (VSPKLASSTPTAETDPKGDGE).

Belongs to the radical SAM superfamily. 7-carboxy-7-deazaguanine synthase family. As to quaternary structure, homodimer. It depends on [4Fe-4S] cluster as a cofactor. S-adenosyl-L-methionine is required as a cofactor. Mg(2+) serves as cofactor.

The catalysed reaction is 6-carboxy-5,6,7,8-tetrahydropterin + H(+) = 7-carboxy-7-deazaguanine + NH4(+). Its pathway is purine metabolism; 7-cyano-7-deazaguanine biosynthesis. Catalyzes the complex heterocyclic radical-mediated conversion of 6-carboxy-5,6,7,8-tetrahydropterin (CPH4) to 7-carboxy-7-deazaguanine (CDG), a step common to the biosynthetic pathways of all 7-deazapurine-containing compounds. The sequence is that of 7-carboxy-7-deazaguanine synthase from Halobacterium salinarum (strain ATCC 29341 / DSM 671 / R1).